A 491-amino-acid polypeptide reads, in one-letter code: Spermatogenesis-defective protein 39 homolog (491 aa).

T21 is subject to Phosphothreonine. A compositionally biased stretch (polar residues) spans 72–81 (KETAGSSGST). Residues 72–101 (KETAGSSGSTPEGREQLKGRNSFYTQLPKP) form a disordered region. T115 bears the Phosphothreonine mark. Phosphoserine is present on residues S119, S122, and S128. The tract at residues 121 to 141 (QSLSDALSDTPAKSYAPELGR) is disordered. The residue at position 130 (T130) is a Phosphothreonine.

The protein belongs to the SPE39 family. As to quaternary structure, interacts with VPS33B. Associates with the homotypic fusion and vacuole protein sorting (HOPS) complex; impaired by VPS33B. Interacts with RAB11A.

It is found in the cytoplasm. The protein localises to the cytoplasmic vesicle. It localises to the early endosome. Its subcellular location is the recycling endosome. The protein resides in the late endosome. Functionally, proposed to be involved in endosomal maturation implicating in part VPS33B. In epithelial cells, the VPS33B:VIPAS39 complex may play a role in the apical RAB11A-dependent recycling pathway and in the maintenance of the apical-basolateral polarity. May play a role in lysosomal trafficking, probably via association with the core HOPS complex in a discrete population of endosomes; the functions seems to be independent of VPS33B. May play a role in vesicular trafficking during spermatogenesis. May be involved in direct or indirect transcriptional regulation of E-cadherin. This Mus musculus (Mouse) protein is Spermatogenesis-defective protein 39 homolog (Vipas39).